Here is a 485-residue protein sequence, read N- to C-terminus: Palmitoyltransferase ZDHHC1 (485 aa).

The segment at 1-41 (MYKMNICNKPSNKTAPEKSVWTAPAQPSGPSPELQGQRSRR) is disordered. Residues 1–52 (MYKMNICNKPSNKTAPEKSVWTAPAQPSGPSPELQGQRSRRNGWSWPPHPLQ) are Cytoplasmic-facing. The mediates interaction with STING1 stretch occupies residues 1–271 (MYKMNICNKP…GHLLCFHIYL (271 aa)). A helical transmembrane segment spans residues 53–73 (IVAWLLYLFFAVIGFGILVPL). At 74 to 77 (LPHH) the chain is on the lumenal side. The helical transmembrane segment at 78–98 (WVPAGYACMGAIFAGHLVVHL) threads the bilayer. At 99-185 (TAVSIDPADA…YRLFLHSVAS (87 aa)) the chain is on the cytoplasmic side. The DHHC domain maps to 134–184 (LHCNLCNVDVSARSKHCSACNKCVCGFDHHCKWLNNCVGERNYRLFLHSVA). The active-site S-palmitoyl cysteine intermediate is Cys-164. Residues 186–206 (ALLGVLLLVLVATYVFVEFFV) form a helical membrane-spanning segment. Residues 207–241 (NPMRLRTNRHFEVLKNHTDVWFVFLPAAPVETQAP) are Lumenal-facing. A helical transmembrane segment spans residues 242–262 (AILALAALLILLGLLSTALLG). Residues 263 to 485 (HLLCFHIYLM…RGRRVRPPFS (223 aa)) are Cytoplasmic-facing. Disordered stretches follow at residues 324–358 (EPPGQAGPAAVNAKHSRPASPDPTPGRRDCAGPPV) and 462–485 (LWPPRGAGADSPRWRGRRVRPPFS). Over residues 475-485 (WRGRRVRPPFS) the composition is skewed to basic residues.

This sequence belongs to the DHHC palmitoyltransferase family. Interacts with STING1; ZDHHC1 constitutively interacts with STING1 and in presence of DNA viruses activates it by promoting its cGAMP-induced oligomerization and the recruitment of downstream signaling components. As to expression, widely expressed with significant expression in heart, brain, placenta, lung, liver, kidney, testis, thymus and small intestine. Expressed at lower levels in adult pancreas and lung.

It is found in the endosome membrane. Its subcellular location is the endoplasmic reticulum membrane. The protein localises to the golgi apparatus. It catalyses the reaction L-cysteinyl-[protein] + hexadecanoyl-CoA = S-hexadecanoyl-L-cysteinyl-[protein] + CoA. Palmitoyltransferase that catalyzes the addition of palmitate onto various protein substrates, such as NCDN and NLRP3. Has a palmitoyltransferase activity toward NCDN and regulates NCDN association with endosome membranes through this palmitoylation. Acts as an activator of the NLRP3 inflammasome by mediating palmitoylation of 'Cys-130' and 'Cys-958' of NLRP3, thereby promoting NLRP3 phosphorylation and activation by NEK7. Functionally, also has a palmitoyltransferase activity-independent function in DNA virus-triggered and CGAS-mediated innate immune response. Functions as an activator of STING1 by promoting its cGAMP-induced oligomerization and the recruitment of downstream signaling components. The polypeptide is Palmitoyltransferase ZDHHC1 (Homo sapiens (Human)).